Here is a 246-residue protein sequence, read N- to C-terminus: 1-(5-phosphoribosyl)-5-[(5-phosphoribosylamino)methylideneamino] imidazole-4-carboxamide isomerase (246 aa).

D8 serves as the catalytic Proton acceptor. The active-site Proton donor is the D131.

Belongs to the HisA/HisF family.

The protein localises to the cytoplasm. It catalyses the reaction 1-(5-phospho-beta-D-ribosyl)-5-[(5-phospho-beta-D-ribosylamino)methylideneamino]imidazole-4-carboxamide = 5-[(5-phospho-1-deoxy-D-ribulos-1-ylimino)methylamino]-1-(5-phospho-beta-D-ribosyl)imidazole-4-carboxamide. Its pathway is amino-acid biosynthesis; L-histidine biosynthesis; L-histidine from 5-phospho-alpha-D-ribose 1-diphosphate: step 4/9. The protein is 1-(5-phosphoribosyl)-5-[(5-phosphoribosylamino)methylideneamino] imidazole-4-carboxamide isomerase of Lactococcus lactis subsp. cremoris (strain SK11).